A 548-amino-acid chain; its full sequence is Flagellin (548 aa).

The protein belongs to the bacterial flagellin family.

The protein resides in the secreted. It localises to the bacterial flagellum. Flagellin is the subunit protein which polymerizes to form the filaments of bacterial flagella. This Escherichia coli O127:H6 (strain E2348/69 / EPEC) protein is Flagellin (fliC).